A 455-amino-acid chain; its full sequence is UDP-N-acetylmuramoylalanine--D-glutamate ligase (455 aa).

119–125 (GTNGKTT) contributes to the ATP binding site.

Belongs to the MurCDEF family.

The protein resides in the cytoplasm. The catalysed reaction is UDP-N-acetyl-alpha-D-muramoyl-L-alanine + D-glutamate + ATP = UDP-N-acetyl-alpha-D-muramoyl-L-alanyl-D-glutamate + ADP + phosphate + H(+). It functions in the pathway cell wall biogenesis; peptidoglycan biosynthesis. Functionally, cell wall formation. Catalyzes the addition of glutamate to the nucleotide precursor UDP-N-acetylmuramoyl-L-alanine (UMA). The chain is UDP-N-acetylmuramoylalanine--D-glutamate ligase from Listeria monocytogenes serotype 4b (strain F2365).